The chain runs to 130 residues: Small ribosomal subunit protein uS8 (130 aa).

This sequence belongs to the universal ribosomal protein uS8 family. Part of the 30S ribosomal subunit. Contacts proteins S5 and S12.

Functionally, one of the primary rRNA binding proteins, it binds directly to 16S rRNA central domain where it helps coordinate assembly of the platform of the 30S subunit. This is Small ribosomal subunit protein uS8 from Alteromonas mediterranea (strain DSM 17117 / CIP 110805 / LMG 28347 / Deep ecotype).